The primary structure comprises 379 residues: Chaperone protein DnaJ (379 aa).

A J domain is found at 7 to 72; the sequence is CYYETLEVER…DKRAAYDRYG (66 aa). A CR-type zinc finger spans residues 135-213; it reads GKTAQIEIPV…CTGSGRVTKE (79 aa). 8 residues coordinate Zn(2+): C148, C151, C165, C168, C187, C190, C201, and C204. 4 CXXCXGXG motif repeats span residues 148–155, 165–172, 187–194, and 201–208; these read CEACSGTG, CSTCGGAG, CPSCQGRG, and CPSCTGSG.

Belongs to the DnaJ family. Homodimer. Zn(2+) serves as cofactor.

The protein resides in the cytoplasm. Functionally, participates actively in the response to hyperosmotic and heat shock by preventing the aggregation of stress-denatured proteins and by disaggregating proteins, also in an autonomous, DnaK-independent fashion. Unfolded proteins bind initially to DnaJ; upon interaction with the DnaJ-bound protein, DnaK hydrolyzes its bound ATP, resulting in the formation of a stable complex. GrpE releases ADP from DnaK; ATP binding to DnaK triggers the release of the substrate protein, thus completing the reaction cycle. Several rounds of ATP-dependent interactions between DnaJ, DnaK and GrpE are required for fully efficient folding. Also involved, together with DnaK and GrpE, in the DNA replication of plasmids through activation of initiation proteins. The chain is Chaperone protein DnaJ from Rhodopseudomonas palustris (strain ATCC BAA-98 / CGA009).